Here is a 566-residue protein sequence, read N- to C-terminus: Hemocyanin B chain (566 aa).

A disulfide bridge links cysteine 82 with cysteine 87. Cu cation contacts are provided by histidine 183, histidine 187, histidine 213, histidine 309, histidine 313, and histidine 347.

This sequence belongs to the tyrosinase family. Hemocyanin subfamily. As to expression, hemolymph.

It localises to the secreted. It is found in the extracellular space. Functionally, hemocyanins are copper-containing oxygen carriers occurring freely dissolved in the hemolymph of many mollusks and arthropods. In Astacus leptodactylus (Turkish narrow-clawed crayfish), this protein is Hemocyanin B chain.